We begin with the raw amino-acid sequence, 545 residues long: Ribulokinase (545 aa).

The protein belongs to the ribulokinase family.

It carries out the reaction D-ribulose + ATP = D-ribulose 5-phosphate + ADP + H(+). It catalyses the reaction L-ribulose + ATP = L-ribulose 5-phosphate + ADP + H(+). The protein operates within carbohydrate degradation; L-arabinose degradation via L-ribulose; D-xylulose 5-phosphate from L-arabinose (bacterial route): step 2/3. The chain is Ribulokinase from Staphylococcus aureus (strain MRSA252).